The primary structure comprises 250 residues: 5'-nucleotidase SurE (250 aa).

A divalent metal cation-binding residues include D8, D9, S39, and N92.

This sequence belongs to the SurE nucleotidase family. Requires a divalent metal cation as cofactor.

The protein resides in the cytoplasm. It catalyses the reaction a ribonucleoside 5'-phosphate + H2O = a ribonucleoside + phosphate. In terms of biological role, nucleotidase that shows phosphatase activity on nucleoside 5'-monophosphates. This Vibrio cholerae serotype O1 (strain ATCC 39315 / El Tor Inaba N16961) protein is 5'-nucleotidase SurE.